We begin with the raw amino-acid sequence, 537 residues long: Chaperonin GroEL 1 (537 aa).

ATP contacts are provided by residues T29–P32, D86–T90, G413, and D494.

This sequence belongs to the chaperonin (HSP60) family. As to quaternary structure, forms a cylinder of 14 subunits composed of two heptameric rings stacked back-to-back. Interacts with the co-chaperonin GroES.

Its subcellular location is the cytoplasm. It catalyses the reaction ATP + H2O + a folded polypeptide = ADP + phosphate + an unfolded polypeptide.. Functionally, together with its co-chaperonin GroES, plays an essential role in assisting protein folding. The GroEL-GroES system forms a nano-cage that allows encapsulation of the non-native substrate proteins and provides a physical environment optimized to promote and accelerate protein folding. The chain is Chaperonin GroEL 1 from Mycobacterium leprae (strain TN).